A 491-amino-acid polypeptide reads, in one-letter code: UDP-N-acetylmuramate--L-alanine ligase (491 aa).

126–132 (GTHGKTT) serves as a coordination point for ATP.

The protein belongs to the MurCDEF family.

Its subcellular location is the cytoplasm. It carries out the reaction UDP-N-acetyl-alpha-D-muramate + L-alanine + ATP = UDP-N-acetyl-alpha-D-muramoyl-L-alanine + ADP + phosphate + H(+). It functions in the pathway cell wall biogenesis; peptidoglycan biosynthesis. Cell wall formation. This Salmonella arizonae (strain ATCC BAA-731 / CDC346-86 / RSK2980) protein is UDP-N-acetylmuramate--L-alanine ligase.